The following is a 326-amino-acid chain: Polycomb complex protein BMI-1-A (326 aa).

The RING-type zinc finger occupies 18–57 (CVLCGGYFIDATTIIECLHSFCKTCIVRYLETSKYCPICD). The short motif at 81–95 (KLVPGLFKGEMKRRR) is the Nuclear localization signal element. Disordered regions lie at residues 239–262 (NPHTDRINHTSGDMESDSGSDKAG) and 274–326 (CIPS…ISSG). The span at 290–303 (ISSTINGTSSSSSS) shows a compositional bias: low complexity.

As to quaternary structure, component of a PRC1-like complex. Interacts with cbx4.

The protein localises to the nucleus. Its function is as follows. Component of a Polycomb group (PcG) multiprotein PRC1-like complex, a complex class required to maintain the transcriptionally repressive state of many genes, including Hox genes, throughout development. PcG PRC1 complex acts via chromatin remodeling and modification of histones; it mediates monoubiquitination of histone H2A 'Lys-119', rendering chromatin heritably changed in its expressibility. In the PRC1 complex, it is required to stimulate the E3 ubiquitin-protein ligase activity of rnf2. This chain is Polycomb complex protein BMI-1-A (bmi1a), found in Xenopus laevis (African clawed frog).